Reading from the N-terminus, the 225-residue chain is Ribonuclease 3 (225 aa).

An RNase III domain is found at 4–133; sequence FEKLETLLGY…LIAAIYLDSN (130 aa). Glutamate 46 provides a ligand contact to Mg(2+). The active site involves aspartate 50. The Mg(2+) site is built by asparagine 119 and glutamate 122. The active site involves glutamate 122. The region spanning 158-225 is the DRBM domain; sequence DPKTALQEWA…AARSLLHRLK (68 aa).

It belongs to the ribonuclease III family. Homodimer. Requires Mg(2+) as cofactor.

It is found in the cytoplasm. It catalyses the reaction Endonucleolytic cleavage to 5'-phosphomonoester.. In terms of biological role, digests double-stranded RNA. Involved in the processing of primary rRNA transcript to yield the immediate precursors to the large and small rRNAs (23S and 16S). Processes some mRNAs, and tRNAs when they are encoded in the rRNA operon. Processes pre-crRNA and tracrRNA of type II CRISPR loci if present in the organism. The sequence is that of Ribonuclease 3 from Rickettsia prowazekii (strain Madrid E).